A 395-amino-acid chain; its full sequence is DDB1- and CUL4-associated factor 4-like protein 2 (395 aa).

WD repeat units follow at residues 268–307 and 312–351; these read SHDS…CVTQ and VNNS…LLTT.

The polypeptide is DDB1- and CUL4-associated factor 4-like protein 2 (DCAF4L2) (Homo sapiens (Human)).